The primary structure comprises 414 residues: MATAAAETLGLLWGWLWSESFWLPQNVSWADLEGPGDGYGYPRAQHVLSVFPLAVCIFSVRMLFERFIAKPCALRVGIKDSPVNKVEPNDTLEKVFVSVTKYPDEKRLKGLSKQLDWSVRKIQCWFRHRRNQDKPPTLTKFCESMWRFTYYLCIFCYGIRFLWSMPWFWDTRQCWYNYPYQPLSRELYYYYITQLAFYWSLMFSQFIDVKRKDFLMMFIHHMIGIMLTTFSYVNNMVRVGALIFCLHDFADPLLEAAKMANYARRERLCTTLFVIFGAAFIVSRLAIFPLWILNTTLFESWEIIGPYPSWWLFNALLLILQVLHAIWSYLIVQTASKALSRGKVSKDDRSDVESSSEEEDETTHKNNLSGSSSSNGANCMNGYMGGSHLAEEQGTCKATGNLHFRASPHLHSCD.

Residues 1–43 (MATAAAETLGLLWGWLWSESFWLPQNVSWADLEGPGDGYGYPR) lie on the Lumenal side of the membrane. Asparagine 26 carries N-linked (GlcNAc...) asparagine glycosylation. A helical transmembrane segment spans residues 44 to 64 (AQHVLSVFPLAVCIFSVRMLF). Positions 75–136 (RVGIKDSPVN…RHRRNQDKPP (62 aa)) are homeobox-like. The region spanning 139-340 (TKFCESMWRF…IVQTASKALS (202 aa)) is the TLC domain. A run of 4 helical transmembrane segments spans residues 148 to 168 (FTYYLCIFCYGIRFLWSMPWF), 187 to 207 (LYYYYITQLAFYWSLMFSQFI), 214 to 234 (FLMMFIHHMIGIMLTTFSYVN), and 272 to 292 (LFVIFGAAFIVSRLAIFPLWI). The Last loop motif motif lies at 299-309 (ESWEIIGPYPS). A helical transmembrane segment spans residues 312 to 332 (LFNALLLILQVLHAIWSYLIV). The Cytoplasmic portion of the chain corresponds to 333–414 (QTASKALSRG…RASPHLHSCD (82 aa)). Residues 347-373 (DDRSDVESSSEEEDETTHKNNLSGSSS) form a disordered region.

As to quaternary structure, interacts with PAQR4; the interaction regulates the stability and activity of CERS5 and is inhibited in presence of ceramides. Phosphorylated at the C-terminus by CK2. In terms of tissue distribution, ubiquitously expressed, with highest levels in testis and kidney. Expressed in pulmonary epithelia.

Its subcellular location is the endoplasmic reticulum membrane. The catalysed reaction is a sphingoid base + hexadecanoyl-CoA = an N-hexadecanoyl-sphingoid base + CoA + H(+). It catalyses the reaction sphinganine + hexadecanoyl-CoA = N-hexadecanoylsphinganine + CoA + H(+). The enzyme catalyses hexadecasphinganine + hexadecanoyl-CoA = N-hexadecanoylhexadecasphinganine + CoA + H(+). It carries out the reaction sphing-4-enine + hexadecanoyl-CoA = N-hexadecanoylsphing-4-enine + CoA + H(+). The catalysed reaction is 2-hydroxyhexadecanoyl-CoA + sphinganine = N-(2-hydroxyhexadecanoyl)-sphinganine + CoA + H(+). It catalyses the reaction sphinganine + tetradecanoyl-CoA = N-(tetradecanoyl)-sphinganine + CoA + H(+). The enzyme catalyses sphinganine + octadecanoyl-CoA = N-(octadecanoyl)-sphinganine + CoA + H(+). It carries out the reaction sphinganine + (9Z)-octadecenoyl-CoA = N-(9Z-octadecenoyl)-sphinganine + CoA + H(+). The catalysed reaction is a fatty acyl-CoA + sphing-4-enine = an N-acylsphing-4-enine + CoA + H(+). It catalyses the reaction tetracosenoyl-CoA + sphing-4-enine = N-(tetracosenoyl)-sphing-4-enine + CoA + H(+). It participates in lipid metabolism; sphingolipid metabolism. Inhibited by fumonisin B1. Ceramide synthase that catalyzes the transfer of the acyl chain from acyl-CoA to a sphingoid base, with high selectivity toward palmitoyl-CoA (hexadecanoyl-CoA; C16:0-CoA). Can use other acyl donors, but with less efficiency. N-acylates sphinganine and sphingosine bases to form dihydroceramides and ceramides in de novo synthesis and salvage pathways, respectively. Plays a role in de novo ceramide synthesis and surfactant homeostasis in pulmonary epithelia. In Mus musculus (Mouse), this protein is Ceramide synthase 5.